The chain runs to 401 residues: Large ribosomal subunit protein uL3 (401 aa).

Positions 1 to 22 are disordered; the sequence is MSHRKFSAPRHGHMGFTPKKRS.

The protein belongs to the universal ribosomal protein uL3 family.

Its subcellular location is the cytoplasm. The L3 protein is a component of the large subunit of cytoplasmic ribosomes. This is Large ribosomal subunit protein uL3 (rpl-3) from Caenorhabditis elegans.